Consider the following 216-residue polypeptide: Redox-sensing transcriptional repressor Rex (216 aa).

A DNA-binding region (H-T-H motif) is located at residues 20-59; the sequence is QYYRLFKSLVEENVTRTNSQLISEKIGVDAATIRRDFSLF. 94-99 is a binding site for NAD(+); sequence GVGNLG.

Belongs to the transcriptional regulatory Rex family. Homodimer.

Its subcellular location is the cytoplasm. Its function is as follows. Modulates transcription in response to changes in cellular NADH/NAD(+) redox state. This is Redox-sensing transcriptional repressor Rex from Lactococcus lactis subsp. lactis (strain IL1403) (Streptococcus lactis).